Here is a 134-residue protein sequence, read N- to C-terminus: Small ribosomal subunit protein uS11 (134 aa).

Belongs to the universal ribosomal protein uS11 family. Part of the 30S ribosomal subunit. Interacts with proteins S7 and S18. Binds to IF-3.

Its function is as follows. Located on the platform of the 30S subunit, it bridges several disparate RNA helices of the 16S rRNA. Forms part of the Shine-Dalgarno cleft in the 70S ribosome. The chain is Small ribosomal subunit protein uS11 from Salinibacter ruber (strain DSM 13855 / M31).